Reading from the N-terminus, the 155-residue chain is Ribosomal RNA large subunit methyltransferase H (155 aa).

Residues leucine 72, glycine 103, and phenylalanine 122–tryptophan 127 each bind S-adenosyl-L-methionine.

Belongs to the RNA methyltransferase RlmH family. Homodimer.

The protein localises to the cytoplasm. It carries out the reaction pseudouridine(1915) in 23S rRNA + S-adenosyl-L-methionine = N(3)-methylpseudouridine(1915) in 23S rRNA + S-adenosyl-L-homocysteine + H(+). Its function is as follows. Specifically methylates the pseudouridine at position 1915 (m3Psi1915) in 23S rRNA. The sequence is that of Ribosomal RNA large subunit methyltransferase H from Cereibacter sphaeroides (strain ATCC 17023 / DSM 158 / JCM 6121 / CCUG 31486 / LMG 2827 / NBRC 12203 / NCIMB 8253 / ATH 2.4.1.) (Rhodobacter sphaeroides).